The chain runs to 176 residues: Large ribosomal subunit protein uL10 (176 aa).

This sequence belongs to the universal ribosomal protein uL10 family. Part of the ribosomal stalk of the 50S ribosomal subunit. The N-terminus interacts with L11 and the large rRNA to form the base of the stalk. The C-terminus forms an elongated spine to which L12 dimers bind in a sequential fashion forming a multimeric L10(L12)X complex.

Its function is as follows. Forms part of the ribosomal stalk, playing a central role in the interaction of the ribosome with GTP-bound translation factors. This is Large ribosomal subunit protein uL10 from Thioalkalivibrio sulfidiphilus (strain HL-EbGR7).